Here is a 251-residue protein sequence, read N- to C-terminus: Cell division protein ZapD (251 aa).

Belongs to the ZapD family. In terms of assembly, interacts with FtsZ.

Its subcellular location is the cytoplasm. In terms of biological role, cell division factor that enhances FtsZ-ring assembly. Directly interacts with FtsZ and promotes bundling of FtsZ protofilaments, with a reduction in FtsZ GTPase activity. The protein is Cell division protein ZapD of Burkholderia lata (strain ATCC 17760 / DSM 23089 / LMG 22485 / NCIMB 9086 / R18194 / 383).